We begin with the raw amino-acid sequence, 344 residues long: Protein L-Myc-1-B (344 aa).

2 stretches are compositionally biased toward polar residues: residues 104-113 (GSPRVTNTQK) and 213-223 (NTMSPQHNFHS). Disordered regions lie at residues 104 to 162 (GSPR…EDEI) and 208 to 271 (LPPE…YLER). Residues 259 to 270 (DLAKRKNHNYLE) are compositionally biased toward basic and acidic residues. Residues 261-313 (AKRKNHNYLERKRRNDLRSRFLALREEVPSLSRSTKTPKVVVLSKATEFLKGL) form the bHLH domain. Residues 313 to 341 (LVIQEQQLTAEKLKLWSRHQQLLRRISQL) form a leucine-zipper region.

In terms of assembly, efficient DNA binding requires dimerization with another bHLH protein. Binds DNA as a heterodimer with MAX. In terms of tissue distribution, high levels in oocytes, modest levels in kidney and low levels in spleen.

It is found in the nucleus. The protein is Protein L-Myc-1-B (mycl1-b) of Xenopus laevis (African clawed frog).